Consider the following 357-residue polypeptide: Protein BMRF2 (357 aa).

Residues 1-11 (MFSCKQHLSLG) are Virion surface-facing. A transmembrane span lies at residues 12–32 (ACVFCLGLLASTPFIWCFVFA). Residues 33-46 (NLLSLEIFSPWQTH) are Virion surface-facing. The hydrophobic stretch at 47 to 67 (VYRLGFPTACLMAVLWTLVPA) threads the membrane. At 68 to 70 (KHA) the chain is on the virion surface side. The segment at 71–91 (VRAVTPAIMLNIASALIFFSL) is a transmembrane helix. The Virion surface segment spans residues 92 to 98 (RVYSTST). A transmembrane helix spans residues 99–121 (WVSAPCLFLANLPLLCLWPRLAI). Over 122 to 133 (EIVYICPAIHQR) the chain is Virion surface. A membrane pass occupies residues 134–154 (FFELGLLLACTIFALSVVSRA). Over 155–158 (LEVS) the chain is Virion surface. The chain crosses the lipid bilayer at residues 159-179 (AVFMSPFFIFLALGSGSLAGA). Over 180-217 (RRNQIYTSGLERRRSIFCARGDHSVASLKETLHKCPWD) the chain is Virion surface. The Integrin binding site signature appears at 199-201 (RGD). A transmembrane helix spans residues 218–238 (LLAISALTVLVVCVMIVLHVH). Residues 239-240 (AE) are Virion surface-facing. The hydrophobic stretch at 241–261 (VFFGLSRYLPLFLCGAMASGG) threads the membrane. The Virion surface segment spans residues 262–267 (LYLGHS). The chain crosses the lipid bilayer at residues 268 to 288 (SIIACVMATLCTLTSVVVYFL). Residues 289–298 (HETLGPLGKT) lie on the Virion surface side of the membrane. A transmembrane helix spans residues 299–319 (VLFISIFVYYFSGVAALSAAM). Topologically, residues 320-335 (RYKLKKFVNGPLVHLR) are virion surface. At 336 to 356 (VVYMCCFVFTFCEYLLVTFIK) the chain is embedded in the membrane. A topological domain (virion surface) is located at residue Ser-357.

This sequence belongs to the herpesviridae BMRF2 family. In terms of assembly, interacts with BDLF2. Interacts with host beta1 integrin family. In terms of processing, extensively glycosylated by O-linked oligosaccharides.

Its subcellular location is the virion membrane. It localises to the host cell membrane. Facilitates virus attachment to oral epithelial cells by binding to host beta1 integrin family. Participates in rearrangement of cellular actin to increase intercellular contacts by binding BDLF2 and thereby promote virus cell-to-cell spreading. This Homo sapiens (Human) protein is Protein BMRF2.